Consider the following 124-residue polypeptide: Large ribosomal subunit protein bL12 (124 aa).

Residues 93 to 124 (GAPSTVKEGASKDEAEEAKKKLEEAGASVELK) are disordered. Basic and acidic residues predominate over residues 101 to 116 (GASKDEAEEAKKKLEE).

This sequence belongs to the bacterial ribosomal protein bL12 family. In terms of assembly, homodimer. Part of the ribosomal stalk of the 50S ribosomal subunit. Forms a multimeric L10(L12)X complex, where L10 forms an elongated spine to which 2 to 4 L12 dimers bind in a sequential fashion. Binds GTP-bound translation factors.

In terms of biological role, forms part of the ribosomal stalk which helps the ribosome interact with GTP-bound translation factors. Is thus essential for accurate translation. The sequence is that of Large ribosomal subunit protein bL12 from Marinobacter nauticus (strain ATCC 700491 / DSM 11845 / VT8) (Marinobacter aquaeolei).